The chain runs to 406 residues: Ascaroside receptor GPR2 (406 aa).

The Extracellular segment spans residues 1–29 (MTQLPYLLDRRGGALAAPATAWGDMMLNR). Residues 30–50 (ALFSVALLSSVGSAWVVLSYA) form a helical membrane-spanning segment. Residues 51–61 (CIKELRSYRHQ) are Cytoplasmic-facing. Residues 62 to 82 (LILGLAISDLLMSLNFMFSAG) traverse the membrane as a helical segment. The Extracellular segment spans residues 83–107 (WNVAGGDLALEESRTACSVNGFLTQ). C99 and C173 form a disulfide bridge. Residues 108 to 128 (VFVVQTDWWILVIAIATYIIL) form a helical membrane-spanning segment. Over 129-143 (GNFKTQSQFIQTHVW) the chain is Cytoplasmic. The chain crosses the membrane as a helical span at residues 144 to 164 (IPWVGPWVLSIIIAAICHGVL). Over 165–185 (GYGYIGGWCWLTSDLMRLLIN) the chain is Extracellular. The chain crosses the membrane as a helical span at residues 186–206 (FIPRWLIVIAIALIYIRLYMI). The Cytoplasmic segment spans residues 207-326 (VRKARKWDIE…AAQLKRIAKK (120 aa)). The helical transmembrane segment at 327–347 (MMVYPVAYAIIWACPTAIRIY) threads the bilayer. Residues 348-356 (QGTTGSRAP) are Extracellular-facing. The chain crosses the membrane as a helical span at residues 357–377 (LWITIVDKSCIVIQGLVDAVV). At 378 to 406 (YGLNERAWQGWRDHIRRIIYKNEGGRIIG) the chain is on the cytoplasmic side.

This sequence belongs to the G-protein coupled receptor 1 family. Interacts with ascaroside receptor GPR3; may form a functional heterodimer. Interacts with guanine nucleotide-binding protein alpha GPA2; to activate adenylate cyclase and positively regulate nematode trap formation.

It localises to the cell membrane. Its function is as follows. G protein-coupled receptor that senses nematode ascaroside pheromones and signals via adenylate cyclase to positively regulate trap formation for nematode capture. The protein is Ascaroside receptor GPR2 of Arthrobotrys oligospora (strain ATCC 24927 / CBS 115.81 / DSM 1491) (Nematode-trapping fungus).